The sequence spans 84 residues: Beta-defensin 119 (84 aa).

The N-terminal stretch at 1 to 21 (MKFLFLFLAILLATEVPVISG) is a signal peptide. Intrachain disulfides connect C28–C55, C35–C49, and C39–C56.

The protein belongs to the beta-defensin family. As to expression, abundant expression in the male reproductive tract only. Expressed abundantly in testis, while expression in epididymis decreased gradually from caput to cauda.

It localises to the secreted. In terms of biological role, has antibacterial activity. The polypeptide is Beta-defensin 119 (DEFB119) (Macaca mulatta (Rhesus macaque)).